We begin with the raw amino-acid sequence, 694 residues long: Polyribonucleotide nucleotidyltransferase (694 aa).

Positions 486 and 492 each coordinate Mg(2+). The region spanning 553 to 612 (PRIETMQIKPTKIASVIGPGGKQIRQIIEETGVQIDVNDLGVVSISASSASAINKAKEII) is the KH domain. Residues 622–690 (GKTYRGRVTS…EKGQLKLSHK (69 aa)) enclose the S1 motif domain.

This sequence belongs to the polyribonucleotide nucleotidyltransferase family. Mg(2+) serves as cofactor.

It is found in the cytoplasm. The enzyme catalyses RNA(n+1) + phosphate = RNA(n) + a ribonucleoside 5'-diphosphate. Its function is as follows. Involved in mRNA degradation. Catalyzes the phosphorolysis of single-stranded polyribonucleotides processively in the 3'- to 5'-direction. In Chlamydia pneumoniae (Chlamydophila pneumoniae), this protein is Polyribonucleotide nucleotidyltransferase.